The primary structure comprises 196 residues: DnaA initiator-associating protein DiaA (196 aa).

One can recognise an SIS domain in the interval 34-196; the sequence is LVQSLLNGNK…DNTLFPHQDV (163 aa).

The protein belongs to the SIS family. DiaA subfamily. In terms of assembly, homotetramer; dimer of dimers.

Required for the timely initiation of chromosomal replication via direct interactions with the DnaA initiator protein. This is DnaA initiator-associating protein DiaA from Escherichia coli O6:K15:H31 (strain 536 / UPEC).